The sequence spans 616 residues: Dihydroxy-acid dehydratase (616 aa).

Mg(2+) is bound at residue Asp-81. Position 122 (Cys-122) interacts with [2Fe-2S] cluster. Asp-123 and Lys-124 together coordinate Mg(2+). At Lys-124 the chain carries N6-carboxylysine. Residue Cys-195 participates in [2Fe-2S] cluster binding. Glu-491 contributes to the Mg(2+) binding site. The active-site Proton acceptor is Ser-517.

This sequence belongs to the IlvD/Edd family. In terms of assembly, homodimer. [2Fe-2S] cluster is required as a cofactor. The cofactor is Mg(2+).

The enzyme catalyses (2R)-2,3-dihydroxy-3-methylbutanoate = 3-methyl-2-oxobutanoate + H2O. It carries out the reaction (2R,3R)-2,3-dihydroxy-3-methylpentanoate = (S)-3-methyl-2-oxopentanoate + H2O. The protein operates within amino-acid biosynthesis; L-isoleucine biosynthesis; L-isoleucine from 2-oxobutanoate: step 3/4. It participates in amino-acid biosynthesis; L-valine biosynthesis; L-valine from pyruvate: step 3/4. Its function is as follows. Functions in the biosynthesis of branched-chain amino acids. Catalyzes the dehydration of (2R,3R)-2,3-dihydroxy-3-methylpentanoate (2,3-dihydroxy-3-methylvalerate) into 2-oxo-3-methylpentanoate (2-oxo-3-methylvalerate) and of (2R)-2,3-dihydroxy-3-methylbutanoate (2,3-dihydroxyisovalerate) into 2-oxo-3-methylbutanoate (2-oxoisovalerate), the penultimate precursor to L-isoleucine and L-valine, respectively. The polypeptide is Dihydroxy-acid dehydratase (Salmonella paratyphi C (strain RKS4594)).